The chain runs to 390 residues: Centrosomal protein of 44 kDa (390 aa).

Residues 11 to 195 (RNLEQVLRLL…ISEDTLSPIT (185 aa)) form a binds with microtubules and centrioles region. The stretch at 233-267 (EITALQTMLAECQEKLKELTLIEKRLDCLEQKMKG) forms a coiled coil. The disordered stretch occupies residues 323–347 (KNKVGRPASIPLSSRYSTASSDSTP). A phosphoserine mark is found at Ser-331 and Ser-345. Low complexity predominate over residues 335–345 (SSRYSTASSDS). Residue Thr-346 is modified to Phosphothreonine. Residues 361-385 (SEETTIQKMERMKKMFEETAELLKC) are a coiled coil.

In terms of assembly, interacts with CROCC. Interacts with POC1B; the interaction is direct and recruits POC1B to centriolar microtubules. Binds to centriolar microtubules.

The protein resides in the cytoplasm. It is found in the cytoskeleton. The protein localises to the microtubule organizing center. Its subcellular location is the centrosome. It localises to the centriole. The protein resides in the spindle pole. It is found in the midbody. In terms of biological role, centriole-enriched microtubule-binding protein involved in centriole biogenesis. In collaboration with CEP295 and POC1B, is required for the centriole-to-centrosome conversion by ensuring the formation of bona fide centriole wall. Functions as a linker component that maintains centrosome cohesion. Associates with CROCC and regulates its stability and localization to the centrosome. This is Centrosomal protein of 44 kDa (CEP44) from Macaca fascicularis (Crab-eating macaque).